A 261-amino-acid chain; its full sequence is Thiamine thiazole synthase (261 aa).

Residues serine 40, 59-60, glycine 67, valine 133, and 159-161 contribute to the NAD(+) site; these read ER and HVD. The Fe cation site is built by aspartate 161 and histidine 176. Residues serine 179 and methionine 226 each contribute to the NAD(+) site. Residue arginine 236 participates in glycine binding.

This sequence belongs to the THI4 family. In terms of assembly, homooctamer; tetramer of dimers. Fe(2+) serves as cofactor.

It carries out the reaction hydrogen sulfide + glycine + NAD(+) = ADP-5-ethyl-4-methylthiazole-2-carboxylate + nicotinamide + 3 H2O + H(+). Its pathway is cofactor biosynthesis; thiamine diphosphate biosynthesis. Involved in the biosynthesis of the thiazole moiety of thiamine. Catalyzes the conversion of NAD and glycine to adenosine diphosphate 5-(2-hydroxyethyl)-4-methylthiazole-2-carboxylate (ADT), an adenylated thiazole intermediate, using free sulfide as a source of sulfur. This chain is Thiamine thiazole synthase, found in Methanococcus vannielii (strain ATCC 35089 / DSM 1224 / JCM 13029 / OCM 148 / SB).